The primary structure comprises 465 residues: Serine/threonine-protein kinase 38 (465 aa).

A2 is subject to N-acetylalanine. The interaction with S100B stretch occupies residues 62–87 (KRLRRSAHARKETEFLRLKRTRLGLE). A Phosphothreonine modification is found at T74. Residues 89–382 (FESLKVIGRG…VEEIKNNLFF (294 aa)) form the Protein kinase domain. Residues 95–103 (IGRGAFGEV) and K118 each bind ATP. The active-site Proton acceptor is D212. S264 is subject to Phosphoserine. Phosphoserine; by autocatalysis is present on S281. Positions 306–311 (WSLGVI) match the UFM1-interacting motif (UFIM) motif. Positions 383 to 455 (EGVDWEHIRE…KRFEGLTARG (73 aa)) constitute an AGC-kinase C-terminal domain. A Phosphothreonine; by STK24/MST3 modification is found at T444.

Belongs to the protein kinase superfamily. AGC Ser/Thr protein kinase family. As to quaternary structure, homodimeric S100B binds two molecules of STK38. Interacts with MOB1 and MOB2. Interacts with MAP3K1 and MAP3K2 (via the kinase catalytic domain). Forms a tripartite complex with MOBKL1B and STK3/MST2. Interacts with MICAL1; leading to inhibit the protein kinase activity by antagonizing activation by MST1/STK4. Requires Mg(2+) as cofactor. Post-translationally, ISGylated. In terms of processing, phosphorylated by STK3/MST2 and this is enhanced by MOBKL1B. Expressed at high levels in spleen, lung, thymus, brain and fat tissue.

The protein resides in the nucleus. It localises to the cytoplasm. Its subcellular location is the chromosome. The enzyme catalyses L-seryl-[protein] + ATP = O-phospho-L-seryl-[protein] + ADP + H(+). The catalysed reaction is L-threonyl-[protein] + ATP = O-phospho-L-threonyl-[protein] + ADP + H(+). With respect to regulation, activated by binding of S100B which releases autoinhibitory N-lobe interactions, enabling ATP to bind and the autophosphorylation of Ser-281. Thr-444 then undergoes calcium-dependent phosphorylation by STK24/MST3. Interactions between phosphorylated Thr-444 and the N-lobe promote additional structural changes that complete the activation of the kinase. Autoinhibition is also released by the binding of MOB1/MOBKL1A and MOB2/HCCA2 to the N-terminal of STK38. Serine/threonine-protein kinase that acts as a negative regulator of MAP3K1/2 signaling. Converts MAP3K2 from its phosphorylated form to its non-phosphorylated form and inhibits autophosphorylation of MAP3K2. Acts as an ufmylation 'reader' in a kinase-independent manner: specifically recognizes and binds mono-ufmylated histone H4 in response to DNA damage, promoting the recruitment of SUV39H1 to the double-strand breaks, resulting in ATM activation. The chain is Serine/threonine-protein kinase 38 from Mus musculus (Mouse).